A 1495-amino-acid polypeptide reads, in one-letter code: Ras GTPase-activating-like protein IQG1 (1495 aa).

The 114-residue stretch at 108 to 221 (LCRVSEVKIW…ILISMINKKW (114 aa)) folds into the Calponin-homology (CH) domain. Residue T264 is modified to Phosphothreonine. A Phosphoserine modification is found at S268. Residue T299 is modified to Phosphothreonine. IQ domains are found at residues 447–467 (EQDILRFQACLRGNKFRVLSS), 538–567 (SHYPLTKLQSYMRASYVRKKVMSLNTKLND), 568–597 (ERESIMKFSAIIRGNVVRCSEDAILSAVHD), 599–628 (HKENISKLQSLIRGIFTRSCLASIIYSLGK), 629–658 (ENCNIIQLSACIRGNAVRHKVQSLFAPENN), 687–716 (EYNNLALFQAFSRGALVRESLDQKSSFYKR), and 717–746 (NVRSVIMIQSWIRKSLQRSAYLELLDCPNP). The stretch at 759 to 798 (NGTATIEEVQNQLESCQASLDSENMKKERLLKSIRQQLNI) forms a coiled coil. Positions 876–1100 (SYFTRFVCEM…PHIKDVLYNV (225 aa)) constitute a Ras-GAP domain.

Interacts with AFR1. Interacts with AKR1. Interacts with activated CDC42. Interacts with calmodulin CMD1. Interacts with myosin MYO1 and its light chain MLC1. Interacts with BUD4. Interacts with INN1. Interacts with SEC3. Interacts with TEM1.

It localises to the bud neck. In terms of biological role, required for the assembly and the contraction of the actomyosin ring at the bud neck during cytokinesis. Seems to be involved in additional tasks during cell division like axial bud-site selection and targeted secretion by recruiting the spatial landmark BUD4, the septin CDC12 and the secretion landmark SEC3 to the bud neck. May be regulated by calcium ions. The polypeptide is Ras GTPase-activating-like protein IQG1 (IQG1) (Saccharomyces cerevisiae (strain ATCC 204508 / S288c) (Baker's yeast)).